Here is a 630-residue protein sequence, read N- to C-terminus: 1-deoxy-D-xylulose-5-phosphate synthase (630 aa).

Thiamine diphosphate is bound by residues histidine 72 and 113–115 (GHS). Aspartate 144 serves as a coordination point for Mg(2+). Thiamine diphosphate contacts are provided by residues 145-146 (GA), asparagine 173, tyrosine 284, and glutamate 367. Asparagine 173 is a Mg(2+) binding site.

It belongs to the transketolase family. DXPS subfamily. In terms of assembly, homodimer. Requires Mg(2+) as cofactor. The cofactor is thiamine diphosphate.

It catalyses the reaction D-glyceraldehyde 3-phosphate + pyruvate + H(+) = 1-deoxy-D-xylulose 5-phosphate + CO2. It participates in metabolic intermediate biosynthesis; 1-deoxy-D-xylulose 5-phosphate biosynthesis; 1-deoxy-D-xylulose 5-phosphate from D-glyceraldehyde 3-phosphate and pyruvate: step 1/1. In terms of biological role, catalyzes the acyloin condensation reaction between C atoms 2 and 3 of pyruvate and glyceraldehyde 3-phosphate to yield 1-deoxy-D-xylulose-5-phosphate (DXP). This Geobacillus sp. (strain WCH70) protein is 1-deoxy-D-xylulose-5-phosphate synthase.